We begin with the raw amino-acid sequence, 206 residues long: Protein-methionine-sulfoxide reductase heme-binding subunit MsrQ (206 aa).

The next 6 membrane-spanning stretches (helical) occupy residues 14-34, 45-65, 82-102, 118-138, 149-169, and 179-199; these read IKPL…WLGA, FLTR…LAIT, MCGL…VWWD, PFIT…ATST, WQVL…HFWW, and QPLL…AAWW.

It belongs to the MsrQ family. Heterodimer of a catalytic subunit (MsrP) and a heme-binding subunit (MsrQ). Requires FMN as cofactor. Heme b is required as a cofactor.

The protein resides in the cell inner membrane. Part of the MsrPQ system that repairs oxidized periplasmic proteins containing methionine sulfoxide residues (Met-O), using respiratory chain electrons. Thus protects these proteins from oxidative-stress damage caused by reactive species of oxygen and chlorine generated by the host defense mechanisms. MsrPQ is essential for the maintenance of envelope integrity under bleach stress, rescuing a wide series of structurally unrelated periplasmic proteins from methionine oxidation. MsrQ provides electrons for reduction to the reductase catalytic subunit MsrP, using the quinone pool of the respiratory chain. The sequence is that of Protein-methionine-sulfoxide reductase heme-binding subunit MsrQ from Bordetella bronchiseptica (strain ATCC BAA-588 / NCTC 13252 / RB50) (Alcaligenes bronchisepticus).